Consider the following 407-residue polypeptide: Tyrosine--tRNA ligase (407 aa).

Residues 47-56 (PTAPDLHLGA) carry the 'HIGH' region motif. Residues 231–235 (KMSKS) carry the 'KMSKS' region motif. Lysine 234 is a binding site for ATP. The region spanning 342 to 403 (PRLSQLLVQV…GKRHFARVAL (62 aa)) is the S4 RNA-binding domain.

The protein belongs to the class-I aminoacyl-tRNA synthetase family. TyrS type 2 subfamily. In terms of assembly, homodimer.

The protein localises to the cytoplasm. It carries out the reaction tRNA(Tyr) + L-tyrosine + ATP = L-tyrosyl-tRNA(Tyr) + AMP + diphosphate + H(+). In terms of biological role, catalyzes the attachment of tyrosine to tRNA(Tyr) in a two-step reaction: tyrosine is first activated by ATP to form Tyr-AMP and then transferred to the acceptor end of tRNA(Tyr). In Acidithiobacillus ferrooxidans (Thiobacillus ferrooxidans), this protein is Tyrosine--tRNA ligase.